The chain runs to 329 residues: GTP 3',8-cyclase (329 aa).

A Radical SAM core domain is found at Ala8–Arg229. Arg17 is a binding site for GTP. Residues Cys24 and Cys28 each coordinate [4Fe-4S] cluster. S-adenosyl-L-methionine is bound at residue Tyr30. A [4Fe-4S] cluster-binding site is contributed by Cys31. Position 68 (Arg68) interacts with GTP. Gly72 is a binding site for S-adenosyl-L-methionine. Thr99 is a binding site for GTP. Ser123 serves as a coordination point for S-adenosyl-L-methionine. Lys160 contacts GTP. Met194 provides a ligand contact to S-adenosyl-L-methionine. Residues Cys257 and Cys260 each contribute to the [4Fe-4S] cluster site. Arg262–Arg264 is a GTP binding site. Residue Cys274 participates in [4Fe-4S] cluster binding.

It belongs to the radical SAM superfamily. MoaA family. In terms of assembly, monomer and homodimer. [4Fe-4S] cluster serves as cofactor.

It carries out the reaction GTP + AH2 + S-adenosyl-L-methionine = (8S)-3',8-cyclo-7,8-dihydroguanosine 5'-triphosphate + 5'-deoxyadenosine + L-methionine + A + H(+). Its pathway is cofactor biosynthesis; molybdopterin biosynthesis. Catalyzes the cyclization of GTP to (8S)-3',8-cyclo-7,8-dihydroguanosine 5'-triphosphate. This Edwardsiella ictaluri (strain 93-146) protein is GTP 3',8-cyclase.